The sequence spans 228 residues: Probable calcium-binding protein CML48 (228 aa).

EF-hand domains follow at residues 52 to 87 (ETHP…SGYD) and 121 to 156 (NCLA…LGCV). Residues Asp65, Asn67, Ser69, and Glu76 each contribute to the Ca(2+) site.

Potential calcium sensor. The sequence is that of Probable calcium-binding protein CML48 (CML48) from Arabidopsis thaliana (Mouse-ear cress).